A 66-amino-acid polypeptide reads, in one-letter code: Small ribosomal subunit protein bS21 (66 aa).

It belongs to the bacterial ribosomal protein bS21 family.

This is Small ribosomal subunit protein bS21 from Rickettsia felis (strain ATCC VR-1525 / URRWXCal2) (Rickettsia azadi).